Here is a 101-residue protein sequence, read N- to C-terminus: uncharacterized protein (101 aa).

The first 25 residues, 1 to 25 (MRKKRLLSRISFSSLFLLCGTLLSA), serve as a signal peptide directing secretion. The N-palmitoyl cysteine moiety is linked to residue Cys26. Cys26 carries the S-diacylglycerol cysteine lipid modification.

This sequence belongs to the MG439/MG440 family.

The protein localises to the cell membrane. This is an uncharacterized protein from Mycoplasma pneumoniae (strain ATCC 29342 / M129 / Subtype 1) (Mycoplasmoides pneumoniae).